The following is a 571-amino-acid chain: Chitin-inducible gibberellin-responsive protein 1 (571 aa).

A compositionally biased stretch (polar residues) spans 61 to 77; that stretch reads TNTPDNQSSTETISAQP. 2 disordered regions span residues 61 to 80 and 151 to 180; these read TNTP…PISP and QRSR…YPTA. The 380-residue stretch at 192 to 571 folds into the GRAS domain; it reads ELREDPQIIV…RKLISASAWH (380 aa). Positions 199–259 are leucine repeat I (LRI); it reads IIVKQLLTRC…VARHGNSGTN (61 aa). The VHIID stretch occupies residues 278 to 343; that stretch reads MRILYNICPY…GGPPRVRITG (66 aa). Positions 309-313 match the VHIID motif; sequence IHIID. Positions 359 to 391 are leucine repeat II (LRII); the sequence is IVGKMLKSMSEEFKIPLEFTPLSVYATQVTKEM. Positions 400 to 494 are PFYRE; the sequence is LSVNFTLQLH…QHCLAKDIVN (95 aa). An SAW region spans residues 497 to 571; that stretch reads ACEGKDRVER…RKLISASAWH (75 aa).

This sequence belongs to the GRAS family.

The protein resides in the nucleus. In terms of biological role, may play a regulatory role in the early step of oligosaccharide elicitor response, downstream of the membrane-associated high-affinity chitin-binding protein. This chain is Chitin-inducible gibberellin-responsive protein 1 (CIGR1), found in Oryza sativa subsp. japonica (Rice).